The primary structure comprises 474 residues: Gamma-aminobutyric acid receptor subunit beta-2 (474 aa).

An N-terminal signal peptide occupies residues 1–25 (MWRVRKRGYFGIWSFPLIIAAVCAQ). Residues 26–244 (SVNDPSNMSL…SFKLKRNIGY (219 aa)) are Extracellular-facing. Residues N32 and N104 are each glycosylated (N-linked (GlcNAc...) asparagine). A histamine-binding site is contributed by Y121. A disulfide bridge connects residues C160 and C174. N173 carries N-linked (GlcNAc...) asparagine glycosylation. Residues 180-181 (SY) and T226 each bind histamine. Positions 181 and 226 each coordinate 4-aminobutanoate. 3 consecutive transmembrane segments (helical) span residues 245-266 (FILQ…SFWI), 270-292 (ASAA…NTHL), and 304-326 (AIDM…YALV). Residues 327–451 (NYIFFGRGPQ…DLTDVNAIDR (125 aa)) are Cytoplasmic-facing. Phosphotyrosine is present on Y403. Residues 452–473 (WSRIFFPVVFSFFNIVYWLYYV) form a helical membrane-spanning segment.

It belongs to the ligand-gated ion channel (TC 1.A.9) family. Gamma-aminobutyric acid receptor (TC 1.A.9.5) subfamily. GABRB2 sub-subfamily. Heteropentamer, formed by a combination of alpha (GABRA1-6), beta (GABRB1-3), gamma (GABRG1-3), delta (GABRD), epsilon (GABRE), rho (GABRR1-3), pi (GABRP) and theta (GABRQ) chains, each subunit exhibiting distinct physiological and pharmacological properties. Interacts with UBQLN1. May interact with KIF21B. Identified in a complex of 720 kDa composed of LHFPL4, NLGN2, GABRA1, GABRB2, GABRG2 and GABRB3. Glycosylated. In terms of tissue distribution, expressed in brain (at protein level), in cerebellar granule cells. Expressed in lungs, in alveolar epithelium.

It localises to the postsynaptic cell membrane. It is found in the cell membrane. The protein localises to the cytoplasmic vesicle membrane. It catalyses the reaction chloride(in) = chloride(out). Allosterically activated by benzodiazepines and the anesthetic etomidate. Inhibited by the antagonist bicuculline. Potentiated by histamine. In terms of biological role, beta subunit of the heteropentameric ligand-gated chloride channel gated by gamma-aminobutyric acid (GABA), a major inhibitory neurotransmitter in the brain. GABA-gated chloride channels, also named GABA(A) receptors (GABAAR), consist of five subunits arranged around a central pore and contain GABA active binding site(s) located at the alpha and beta subunit interface(s). When activated by GABA, GABAARs selectively allow the flow of chloride anions across the cell membrane down their electrochemical gradient. Chloride influx into the postsynaptic neuron following GABAAR opening decreases the neuron ability to generate a new action potential, thereby reducing nerve transmission. GABAARs containing alpha-1 and beta-2 or -3 subunits exhibit synaptogenic activity; the gamma-2 subunit being necessary but not sufficient to induce rapid synaptic contacts formation. Extrasynaptic beta-2 receptors contribute to the tonic GABAergic inhibition. Beta-containing GABAARs can simultaneously bind GABA and histamine where histamine binds at the interface of two neighboring beta subunits, which may be involved in the regulation of sleep and wakefulness. This is Gamma-aminobutyric acid receptor subunit beta-2 from Rattus norvegicus (Rat).